A 422-amino-acid chain; its full sequence is uncharacterized protein (422 aa).

Belongs to the N(4)/N(6)-methyltransferase family.

The enzyme catalyses a 2'-deoxyadenosine in DNA + S-adenosyl-L-methionine = an N(6)-methyl-2'-deoxyadenosine in DNA + S-adenosyl-L-homocysteine + H(+). This is an uncharacterized protein from Mycoplasma pneumoniae (strain ATCC 29342 / M129 / Subtype 1) (Mycoplasmoides pneumoniae).